A 955-amino-acid chain; its full sequence is Kinesin-like protein NACK2 (955 aa).

Residues 36 to 357 (KILVTIRVRP…LCFATSAKEV (322 aa)) form the Kinesin motor domain. Residue 120-127 (GQTSSGKT) coordinates ATP. 2 coiled-coil regions span residues 366-443 (VVAE…LKGS) and 566-604 (KASL…VMHL).

Belongs to the TRAFAC class myosin-kinesin ATPase superfamily. Kinesin family. KIN-7 subfamily.

Its subcellular location is the cytoplasm. The protein localises to the nucleus. It is found in the cytoskeleton. The protein resides in the phragmoplast. Probable plus end-directed motor protein that may function in the NACK-PQR (NPK1-NQK1/MEK1-NRK1) MAP kinase signaling pathway, which is essential for somatic cell cytokinesis, especially for the cell-plate formation and its expansion. May regulate the activity and the localization of NPK1, probably by association through the non-catalytic region of the kinase. The chain is Kinesin-like protein NACK2 (NACK2) from Nicotiana tabacum (Common tobacco).